We begin with the raw amino-acid sequence, 322 residues long: CPX chromosomal region candidate gene 1 protein homolog (322 aa).

2 stretches are compositionally biased toward polar residues: residues 1-23 (MTSS…NETP) and 37-78 (TNIS…TQND). The interval 1-83 (MTSSNQGNDP…MTQNDPPDEE (83 aa)) is disordered.

This Mus musculus (Mouse) protein is CPX chromosomal region candidate gene 1 protein homolog (Cpxcr1).